The chain runs to 261 residues: Kallikrein 1-related peptidase b1 (261 aa).

An N-terminal signal peptide occupies residues 1-18 (MWFLILFLALSLGGIDAA). Positions 19–24 (PPVQSR) are cleaved as a propeptide — activation peptide. The Peptidase S1 domain occupies 25-258 (IVGGFKCEKN…FTSWIKDTLA (234 aa)). 5 disulfide bridges follow: Cys-31–Cys-173, Cys-50–Cys-66, Cys-152–Cys-219, Cys-184–Cys-198, and Cys-209–Cys-234. His-65 acts as the Charge relay system in catalysis. Asn-102 carries an N-linked (GlcNAc...) asparagine glycan. The Charge relay system role is filled by Asp-120. Ser-213 (charge relay system) is an active-site residue.

Belongs to the peptidase S1 family. Kallikrein subfamily.

It carries out the reaction Preferential cleavage of Arg-|-Xaa bonds in small molecule substrates. Highly selective action to release kallidin (lysyl-bradykinin) from kininogen involves hydrolysis of Met-|-Xaa or Leu-|-Xaa.. Functionally, glandular kallikreins cleave Met-Lys and Arg-Ser bonds in kininogen to release Lys-bradykinin. This is Kallikrein 1-related peptidase b1 (Klk1b1) from Mus musculus (Mouse).